An 84-amino-acid chain; its full sequence is Alpha-like toxin BmK M1 (84 aa).

Residues 1-19 (MNYLVMISFALLLMTGVES) form the signal peptide. One can recognise an LCN-type CS-alpha/beta domain in the interval 21 to 83 (RDAYIAKPHN…VPIRVPGKCH (63 aa)). 4 disulfide bridges follow: cysteine 31–cysteine 82, cysteine 35–cysteine 55, cysteine 41–cysteine 65, and cysteine 45–cysteine 67. A propeptide (removed by a carboxypeptidase) is located at residue arginine 84.

This sequence belongs to the long (4 C-C) scorpion toxin superfamily. Sodium channel inhibitor family. Alpha subfamily. Expressed by the venom gland.

The protein resides in the secreted. Its function is as follows. Alpha toxins bind voltage-independently at site-3 of sodium channels (Nav) and inhibit the inactivation of the activated channels thereby blocking neuronal transmission. This toxin is active against both mammals and insects, and is classified as an alpha-like toxin. It is active on Nav1.2/SCN2A (EC(50)=139-252 nM), Nav1.3/SCN3A (EC(50)=565 nM), Nav1.4/SCN4A and Nav1.5/SCN5A (EC(50)=195-500 nM), Nav1.6/SCN8A (EC(50)=214 nM), and drosophila DmNav1 (EC(50)=30 nM). In mNav1.6/SCN8A, the toxin induces a large increase in both transient and persistent currents, which correlates with a prominent reduction in the fast component of inactivating current. In rNav1.2/SCN2A and rNav1.3/SCN3A, toxin-increased currents is much smaller. Moreover, the toxin only accelerates the slow inactivation development and delay recovery of mNav1.6/SCN8A through binding to the channel in the open state. Is 6-fold more toxic than BmK-M2. In vivo, intrahippocampal injection into rat induces epileptiform responses. In addition, intraplantar injection into rat induces spontaneous nociception and hyperalgesia. This Olivierus martensii (Manchurian scorpion) protein is Alpha-like toxin BmK M1.